The primary structure comprises 245 residues: 23S rRNA (guanosine-2'-O-)-methyltransferase RlmB (245 aa).

Positions 197, 217, and 226 each coordinate S-adenosyl-L-methionine.

The protein belongs to the class IV-like SAM-binding methyltransferase superfamily. RNA methyltransferase TrmH family. RlmB subfamily.

The protein localises to the cytoplasm. The enzyme catalyses guanosine(2251) in 23S rRNA + S-adenosyl-L-methionine = 2'-O-methylguanosine(2251) in 23S rRNA + S-adenosyl-L-homocysteine + H(+). Its function is as follows. Specifically methylates the ribose of guanosine 2251 in 23S rRNA. The polypeptide is 23S rRNA (guanosine-2'-O-)-methyltransferase RlmB (Pasteurella multocida (strain Pm70)).